The following is an 898-amino-acid chain: Interleukin enhancer-binding factor 3-B (898 aa).

Residues 5–379 (RIFLNDDRHV…ALKRPIEEDG (375 aa)) form the DZF domain. Disordered stretches follow at residues 52-87 (QEKD…NPTR), 374-403 (PIEE…PPQA), 468-529 (LPTG…VMEL), 627-651 (PPPQ…RGGF), and 711-799 (GEGY…QGAA). Residues 61–71 (ENPEPEETETT) are compositionally biased toward acidic residues. 2 stretches are compositionally biased toward basic and acidic residues: residues 72-81 (EEGKDSEAKT) and 374-384 (PIEEDGEDKSP). The Bipartite nuclear localization signal motif lies at 372-390 (KRPIEEDGEDKSPSKKKKK). The DRBM 1 domain maps to 399–468 (EPPQAMNALM…AVKVLQDMGL (70 aa)). Residues 474–483 (EKEESVDESE) show a composition bias toward acidic residues. Residues 489–513 (QTPSQTADSEQADSSAGDQSESGKQ) show a composition bias toward polar residues. The DRBM 2 domain maps to 521 to 587 (HGKNPVMELN…ALSALEKLFP (67 aa)). Residues 637-651 (RGGMNRGRGRGRGGF) are compositionally biased toward gly residues. Over residues 717 to 747 (PTPPKPFVKKPPPPQQQQQPPPQHASNPPKP) the composition is skewed to pro residues. The span at 749–782 (YNQGYQGHQGGQQQQQPQQQQQQTYNQNQYSNYG) shows a compositional bias: low complexity.

In terms of assembly, a component of a ybx2/frgy2-containing mRNA-ribonucleoprotein (mRNP) complex. Also a component of the CCAAT box transcription factor (CBTF) complex. Phosphorylated. Phosphorylation affects nuclear translocation. Post-translationally, methylated by protein arginine N-methyltransferase 1 (prmt1b) in the RGG-rich domain. Methylation decreases DNA-binding and thereby decreases transcription of the gata2 gene, but does not regulate dsRNA binding or subcellular localization.

The protein resides in the nucleus. Its subcellular location is the cytoplasm. In terms of biological role, RNA-binding protein that plays an essential role in the biogenesis of circular RNAs (circRNAs) which are produced by back-splicing circularization of pre-mRNAs. Within the nucleus, promotes circRNAs processing by stabilizing the regulatory elements residing in the flanking introns of the circularized exons. Plays thereby a role in the back-splicing of a subset of circRNAs. As a consequence, participates in a wide range of transcriptional and post-transcriptional processes. Binds to poly-U elements and AU-rich elements (AREs) in the 3'-UTR of target mRNAs. Upon viral infection, ILF3 accumulates in the cytoplasm and participates in the innate antiviral response. Mechanistically, ILF3 becomes phosphorylated and activated by the double-stranded RNA-activated protein kinase/PKR which releases ILF3 from cellular mature circRNAs. In turn, unbound ILF3 molecules are able to interact with and thus inhibit viral mRNAs. Has a cytoplasmic role early in development as part of a ribonucleoprotein (mRNP) complex which may regulate mRNA transport and/or translation. Following nuclear localization at the mid-blastula transition, acts as a transcription factor and binds the 5'-CCAAT-3' promoter sequence to regulate transcription of the gata2 gene as a subunit of the CCAAT box transcription factor (CBTF). Its role as an mRNP component negatively regulates its activity as a transcription factor by precluding its nuclear localization. This chain is Interleukin enhancer-binding factor 3-B (ilf3-b), found in Xenopus laevis (African clawed frog).